The following is a 351-amino-acid chain: Heat-inducible transcription repressor HrcA (351 aa).

The protein belongs to the HrcA family.

Its function is as follows. Negative regulator of class I heat shock genes (grpE-dnaK-dnaJ and groELS operons). Prevents heat-shock induction of these operons. This chain is Heat-inducible transcription repressor HrcA, found in Fusobacterium nucleatum subsp. nucleatum (strain ATCC 25586 / DSM 15643 / BCRC 10681 / CIP 101130 / JCM 8532 / KCTC 2640 / LMG 13131 / VPI 4355).